A 756-amino-acid polypeptide reads, in one-letter code: Transient receptor potential cation channel subfamily V member 2 (756 aa).

The interval 1–45 is disordered; sequence MTSASNPPAFRLETSDGDEEGSAEVNKGKNEPPPMESPFQGEDRN. Positions 1-385 are required for interaction with SLC50A1; that stretch reads MTSASNPPAF…LLQEKWDRLI (385 aa). The Cytoplasmic segment spans residues 1 to 387; the sequence is MTSASNPPAF…QEKWDRLIPR (387 aa). S15 and S77 each carry phosphoserine. ANK repeat units follow at residues 68–110, 111–157, 158–203, 204–239, 240–288, and 289–315; these read NRFD…TEGS, TGKT…DEFY, RGHS…TCFY, FGELPLSLAACTKQWDVVTYLLENPHQPASLEATDS, LGNT…ICNH, and QGLTPLKLAAKEGKIEIFRHILQREFS. Residues 388-408 form a helical membrane-spanning segment; that stretch reads FFFNFACYLVYMIIFTIVAYH. The Extracellular portion of the chain corresponds to 409–428; that stretch reads QPSLEQPAIPSSKATFGDSM. The chain crosses the membrane as a helical span at residues 429-449; the sequence is LLLGHILILLGGIYLLLGQLW. At 450–455 the chain is on the cytoplasmic side; the sequence is YFWRRR. Residues 456 to 476 traverse the membrane as a helical segment; it reads LFIWISFMDSYFEILFLVQAL. Residues 477–490 lie on the Extracellular side of the membrane; it reads LTVLSQVLRFVETE. Residues 491 to 511 traverse the membrane as a helical segment; that stretch reads WYLPLLVSSLVLGWLNLLYYT. Residues 512–532 lie on the Cytoplasmic side of the membrane; that stretch reads RGFQHTGIYSVMIQKVILRDL. The helical transmembrane segment at 533–553 threads the bilayer; it reads LRFLLVYLVFLFGFAVALVSL. Positions 559 to 583 are disordered; that stretch reads SPKAPEDSNTTVTEKPTLGQEEEPV. The N-linked (GlcNAc...) asparagine glycan is linked to N567. Residues 568 to 604 constitute an intramembrane region (pore-forming); sequence TTVTEKPTLGQEEEPVPYGGILDASLELFKFTIGMGE. Residues 617 to 637 traverse the membrane as a helical segment; it reads VLLLLLAYVLLTYVLLLNMLI. Residues 638–756 lie on the Cytoplasmic side of the membrane; that stretch reads ALMSETVNSV…HLPLQVLQSH (119 aa). The disordered stretch occupies residues 719 to 756; the sequence is EDPSGAGITGYKKNPTSKPGKNSASEEDHLPLQVLQSH. A compositionally biased stretch (polar residues) spans 732–741; that stretch reads NPTSKPGKNS. Phosphoserine is present on residues S743 and S755.

The protein belongs to the transient receptor (TC 1.A.4) family. TrpV subfamily. TRPV2 sub-subfamily. As to quaternary structure, homotetramer. Interacts with a cAMP-dependent protein kinase type II regulatory subunit (PRKAR2A or PRKAR2B) and ACBD3. Interacts with SLC50A1; the interaction probably occurs intracellularly and depends on TRPV2 N-glycosylation. N-glycosylated. Post-translationally, phosphorylated by PKA. As to expression, abundantly expressed in spleen, placenta, skeleton muscle, lung and brain.

It is found in the cell membrane. The protein localises to the cytoplasm. The protein resides in the melanosome. It carries out the reaction Ca(2+)(in) = Ca(2+)(out). The enzyme catalyses Mg(2+)(in) = Mg(2+)(out). It catalyses the reaction Na(+)(in) = Na(+)(out). The catalysed reaction is K(+)(in) = K(+)(out). Its function is as follows. Calcium-permeable, non-selective cation channel with an outward rectification. Seems to be regulated, at least in part, by IGF1, PDGF and neuropeptide head activator. May transduce physical stimuli in mast cells. Activated by temperatures higher than 52 degrees Celsius; is not activated by vanilloids and acidic pH. The protein is Transient receptor potential cation channel subfamily V member 2 (Trpv2) of Mus musculus (Mouse).